Here is a 720-residue protein sequence, read N- to C-terminus: Polyribonucleotide nucleotidyltransferase (720 aa).

Residues aspartate 484 and aspartate 490 each contribute to the Mg(2+) site. Residues 551–610 (PRMYKISIDPSKIGSVIGSGGKTIRSIIEQTNTTVDIENDGTVVIGATDEASAQKAIKII) enclose the KH domain. Residues 620–688 (GSVYTGKVTR…SQGRINLSRR (69 aa)) form the S1 motif domain. The disordered stretch occupies residues 697-720 (PISRNRDSQPRRSGPFRPQDRSNS).

Belongs to the polyribonucleotide nucleotidyltransferase family. Mg(2+) is required as a cofactor.

The protein resides in the cytoplasm. The catalysed reaction is RNA(n+1) + phosphate = RNA(n) + a ribonucleoside 5'-diphosphate. Involved in mRNA degradation. Catalyzes the phosphorolysis of single-stranded polyribonucleotides processively in the 3'- to 5'-direction. The sequence is that of Polyribonucleotide nucleotidyltransferase from Dehalococcoides mccartyi (strain ATCC BAA-2266 / KCTC 15142 / 195) (Dehalococcoides ethenogenes (strain 195)).